The chain runs to 282 residues: Release factor glutamine methyltransferase (282 aa).

S-adenosyl-L-methionine-binding positions include 120-124, aspartate 143, and asparagine 189; that span reads GVGSG. 189-192 provides a ligand contact to substrate; the sequence is NPPY.

The protein belongs to the protein N5-glutamine methyltransferase family. PrmC subfamily.

It carries out the reaction L-glutaminyl-[peptide chain release factor] + S-adenosyl-L-methionine = N(5)-methyl-L-glutaminyl-[peptide chain release factor] + S-adenosyl-L-homocysteine + H(+). Functionally, methylates the class 1 translation termination release factors RF1/PrfA and RF2/PrfB on the glutamine residue of the universally conserved GGQ motif. The sequence is that of Release factor glutamine methyltransferase from Dictyoglomus turgidum (strain DSM 6724 / Z-1310).